A 204-amino-acid polypeptide reads, in one-letter code: Somatotropin (204 aa).

The signal sequence occupies residues 1 to 17 (MERAVLLLSLLSLGVSS). Residue Gln-18 is modified to Pyrrolidone carboxylic acid. His-36 is a binding site for Zn(2+). Cysteines 69 and 177 form a disulfide. Glu-186 serves as a coordination point for Zn(2+). Cysteines 194 and 202 form a disulfide.

Belongs to the somatotropin/prolactin family.

The protein resides in the secreted. In terms of biological role, growth hormone plays an important role in growth control and involved in the regulation of several anabolic processes. This chain is Somatotropin (gh), found in Perca flavescens (American yellow perch).